The following is a 648-amino-acid chain: Probable alpha-galactosidase D (648 aa).

The N-terminal stretch at 1-16 (MEFIVSLLLLSPALVA) is a signal peptide. N-linked (GlcNAc...) asparagine glycosylation is found at asparagine 84 and asparagine 90. A disulfide bridge connects residues cysteine 123 and cysteine 156. Catalysis depends on aspartate 154, which acts as the Nucleophile. 199–203 (EWGID) is a binding site for substrate. Catalysis depends on aspartate 221, which acts as the Proton donor. N-linked (GlcNAc...) asparagine glycosylation is found at asparagine 339, asparagine 350, asparagine 505, and asparagine 572.

This sequence belongs to the glycosyl hydrolase 27 family.

It localises to the secreted. The catalysed reaction is Hydrolysis of terminal, non-reducing alpha-D-galactose residues in alpha-D-galactosides, including galactose oligosaccharides, galactomannans and galactolipids.. Its function is as follows. Hydrolyzes a variety of simple alpha-D-galactoside as well as more complex molecules such as oligosaccharides and polysaccharides. The protein is Probable alpha-galactosidase D (aglD) of Aspergillus fumigatus (strain CBS 144.89 / FGSC A1163 / CEA10) (Neosartorya fumigata).